Consider the following 662-residue polypeptide: UvrABC system protein B (662 aa).

Residues 31-188 (DNIEGGEKAQ…NDLVDIQFER (158 aa)) enclose the Helicase ATP-binding domain. 44–51 (GATGTGKT) provides a ligand contact to ATP. The Beta-hairpin signature appears at 97–120 (YYDYYQPEAYVPSSDTYIEKDSSV). The 167-residue stretch at 435-601 (QIDDLLGEIN…TIKKEIRDLI (167 aa)) folds into the Helicase C-terminal domain. In terms of domain architecture, UVR spans 626–661 (KELVKKLEKQMQEAVEVLDFELAAQIRDMMLEVKAL).

This sequence belongs to the UvrB family. Forms a heterotetramer with UvrA during the search for lesions. Interacts with UvrC in an incision complex.

The protein resides in the cytoplasm. In terms of biological role, the UvrABC repair system catalyzes the recognition and processing of DNA lesions. A damage recognition complex composed of 2 UvrA and 2 UvrB subunits scans DNA for abnormalities. Upon binding of the UvrA(2)B(2) complex to a putative damaged site, the DNA wraps around one UvrB monomer. DNA wrap is dependent on ATP binding by UvrB and probably causes local melting of the DNA helix, facilitating insertion of UvrB beta-hairpin between the DNA strands. Then UvrB probes one DNA strand for the presence of a lesion. If a lesion is found the UvrA subunits dissociate and the UvrB-DNA preincision complex is formed. This complex is subsequently bound by UvrC and the second UvrB is released. If no lesion is found, the DNA wraps around the other UvrB subunit that will check the other stand for damage. This chain is UvrABC system protein B, found in Streptococcus pneumoniae (strain P1031).